A 250-amino-acid polypeptide reads, in one-letter code: N-acetylmuramoyl-L-alanine amidase CwlH (250 aa).

Positions 1–44 (MVTIKKDFIPVSNDNRPGYAMAPAYITVHNTANTAKGADAKMHA) are cleaved as a signal peptide. An N-acetylmuramoyl-L-alanine amidase domain is found at 45–141 (KFVKNPNTSE…KKWSGKECPR (97 aa)).

Belongs to the N-acetylmuramoyl-L-alanine amidase 2 family.

Its subcellular location is the secreted. The catalysed reaction is Hydrolyzes the link between N-acetylmuramoyl residues and L-amino acid residues in certain cell-wall glycopeptides.. In terms of biological role, autolysins are involved in some important biological processes such as cell separation, cell-wall turnover, competence for genetic transformation, formation of the flagella and sporulation. Could play a role in mother cell lysis with CwlC. The chain is N-acetylmuramoyl-L-alanine amidase CwlH (cwlH) from Bacillus subtilis (strain 168).